The following is a 123-amino-acid chain: Large ribosomal subunit protein uL14 (123 aa).

The protein belongs to the universal ribosomal protein uL14 family. In terms of assembly, part of the 50S ribosomal subunit. Forms a cluster with proteins L3 and L19. In the 70S ribosome, L14 and L19 interact and together make contacts with the 16S rRNA in bridges B5 and B8.

Its function is as follows. Binds to 23S rRNA. Forms part of two intersubunit bridges in the 70S ribosome. The polypeptide is Large ribosomal subunit protein uL14 (Wigglesworthia glossinidia brevipalpis).